We begin with the raw amino-acid sequence, 505 residues long: Transcription factor APG (505 aa).

Disordered regions lie at residues 1-40 (MLRGNDTGSDLAELLWDNGAPAPLRPPPPPPFQPFTCSAA), 61-99 (GAANHHHHDDDDDDDDDVPWLHYHPVVDDDDDADADTAP), 119-156 (PAAAASRVDPDPCSSSHGAVVPSTSAAAAKQARTSGGG), 169-242 (PLQQ…APTT), 256-312 (AQRL…SQDE), 324-344 (RRSAARSSKRSRTAEVHNLSE), and 469-505 (PPPPPPPFPHAAATAVEQTPSPPGAADAGNAPAVKQA). The span at 23–33 (PLRPPPPPPFQ) shows a compositional bias: pro residues. Residues 131–144 (CSSSHGAVVPSTSA) are compositionally biased toward polar residues. Low complexity predominate over residues 174–199 (PSGGETASASASAAATSTVPVESTVV). Over residues 200 to 212 (QAATNRLRSTPLF) the composition is skewed to polar residues. Residues 222 to 239 (PPKPSPRAAAPPPPPPLA) are compositionally biased toward pro residues. Basic and acidic residues predominate over residues 288-299 (GDRRQLNWRDSH). Polar residues predominate over residues 300–310 (NNQSAEWSASQ). The span at 324–334 (RRSAARSSKRS) shows a compositional bias: basic residues. The segment covering 335 to 344 (RTAEVHNLSE) has biased composition (basic and acidic residues). The bHLH domain maps to 335-384 (RTAEVHNLSERRRRDRINEKMRALQELIPNCNKIDKASMLEEAIEYLKTL). Positions 492-505 (GAADAGNAPAVKQA) are enriched in low complexity.

It belongs to the bHLH protein family. In terms of assembly, homodimer and heterodimer with ILI5 or ILI6.

The protein resides in the nucleus. In terms of biological role, atypical bHLH transcription factor that acts as a negative regulator of grain size. Binds the transcription factor ILI6 and forms a heterodimer of antagonistic bHLH transcription factors that regulates grain length and weight by controlling cell elongation in lemma and palea. May be involved in the control of lamina inclination through brassinosteroid signaling pathway. The sequence is that of Transcription factor APG (APG) from Oryza sativa subsp. japonica (Rice).